We begin with the raw amino-acid sequence, 224 residues long: C-&gt;U-editing enzyme APOBEC-2 (224 aa).

A disordered region spans residues 1–23 (MAQKEEAAEAAAPASQNGDDLEN). Residues Glu-60 and His-98 each contribute to the Zn(2+) site. The region spanning 64–169 (GRNKTFLCYV…PEVQAALKKL (106 aa)) is the CMP/dCMP-type deaminase domain. Glu-100 serves as the catalytic Proton donor. Residues Cys-128 and Cys-131 each contribute to the Zn(2+) site.

The protein belongs to the cytidine and deoxycytidylate deaminase family. In terms of assembly, homotetramer. It depends on Zn(2+) as a cofactor. Expressed exclusively in heart and skeletal muscle.

The catalysed reaction is cytidine(6666) in apoB mRNA + H2O + H(+) = uridine(6666) in apoB mRNA + NH4(+). Functionally, probable C to U editing enzyme whose physiological substrate is not yet known. Does not display detectable apoB mRNA editing. Has a low intrinsic cytidine deaminase activity. May play a role in the epigenetic regulation of gene expression through the process of active DNA demethylation. In Mus musculus (Mouse), this protein is C-&gt;U-editing enzyme APOBEC-2 (Apobec2).